The chain runs to 876 residues: Leucine--tRNA ligase (876 aa).

Positions 1-20 (MATERYNPRDAEPRWQQKWN) are disordered. A 'HIGH' region motif is present at residues 43 to 53 (PYPSGRIHMGH). A 'KMSKS' region motif is present at residues 632 to 636 (KMSKS). Lys635 provides a ligand contact to ATP.

It belongs to the class-I aminoacyl-tRNA synthetase family.

The protein localises to the cytoplasm. It catalyses the reaction tRNA(Leu) + L-leucine + ATP = L-leucyl-tRNA(Leu) + AMP + diphosphate. This Rhizobium leguminosarum bv. trifolii (strain WSM2304) protein is Leucine--tRNA ligase.